A 200-amino-acid polypeptide reads, in one-letter code: Elongation factor Ts (200 aa).

Positions threonine 82 to valine 85 are involved in Mg(2+) ion dislocation from EF-Tu.

The protein belongs to the EF-Ts family.

The protein localises to the cytoplasm. Functionally, associates with the EF-Tu.GDP complex and induces the exchange of GDP to GTP. It remains bound to the aminoacyl-tRNA.EF-Tu.GTP complex up to the GTP hydrolysis stage on the ribosome. This is Elongation factor Ts from Solidesulfovibrio magneticus (strain ATCC 700980 / DSM 13731 / RS-1) (Desulfovibrio magneticus).